Reading from the N-terminus, the 757-residue chain is Elongation factor G, mitochondrial (757 aa).

In terms of domain architecture, tr-type G spans 66–344 (DRMRNIGISA…VLDYLPCPME (279 aa)). GTP-binding positions include 75 to 82 (AHIDSGKT), 142 to 146 (DTPGH), and 196 to 199 (NKLD).

The protein belongs to the TRAFAC class translation factor GTPase superfamily. Classic translation factor GTPase family. EF-G/EF-2 subfamily.

It localises to the mitochondrion. Its pathway is protein biosynthesis; polypeptide chain elongation. In terms of biological role, mitochondrial GTPase that catalyzes the GTP-dependent ribosomal translocation step during translation elongation. During this step, the ribosome changes from the pre-translocational (PRE) to the post-translocational (POST) state as the newly formed A-site-bound peptidyl-tRNA and P-site-bound deacylated tRNA move to the P and E sites, respectively. Catalyzes the coordinated movement of the two tRNA molecules, the mRNA and conformational changes in the ribosome. This chain is Elongation factor G, mitochondrial, found in Oryza sativa subsp. japonica (Rice).